The chain runs to 3172 residues: Erythronolide synthase EryA3 (3172 aa).

One can recognise a Ketosynthase family 3 (KS3) 1 domain in the interval 38–452; sequence GEPIAIVGMA…GTNAHVIVEE (415 aa). Module stretches follow at residues 41 to 1464 and 1492 to 2891; these read IAIV…DHYL and IAIV…DHIG. Residue C199 is the Acyl-thioester intermediate; for beta-ketoacyl synthase 1 activity of the active site. Residues H334 and H374 each act as for beta-ketoacyl synthase 1 activity in the active site. The segment at 557–874 is acyltransferase 1; that stretch reads VFPGQGAQWQ…LGEAYAQGVE (318 aa). S643 serves as the catalytic Acyl-ester intermediate; for acyltransferase 1 activity. A beta-ketoacyl reductase 1 region spans residues 1117–1294; sequence GTVLVTGGTG…VTSIAWGLWA (178 aa). NADP(+)-binding positions include 1125 to 1128, 1148 to 1151, 1177 to 1178, K1229, and 1249 to 1250; these read TGGI, GRRG, DV, and FS. Y1264 serves as the catalytic Acyl-ester intermediate; for beta-ketoacyl reductase 1 activity. The Carrier 1 domain maps to 1392–1467; the sequence is EHLAHLIRAE…RLADHYLERL (76 aa). S1427 carries the O-(pantetheine 4'-phosphoryl)serine modification. The 428-residue stretch at 1489-1916 folds into the Ketosynthase family 3 (KS3) 2 domain; it reads DDPIAIVGMA…GTNAHVIIAE (428 aa). C1661 serves as the catalytic Acyl-thioester intermediate; for beta-ketoacyl synthase 2 activity. Catalysis depends on for beta-ketoacyl synthase 2 activity residues H1797 and H1837. An acyltransferase 2 region spans residues 2022-2331; it reads VFVFPGQGAQ…LARAHVHGVA (310 aa). Catalysis depends on S2112, which acts as the Acyl-ester intermediate; for acyltransferase 2 activity. Residues 2557–2731 form a beta-ketoacyl reductase 2 region; sequence GTALVTGGTG…ATSVAWGAWA (175 aa). Residues 2565 to 2568, 2588 to 2591, 2617 to 2618, K2666, and 2686 to 2687 contribute to the NADP(+) site; these read TGAL, SRRG, DV, and FS. Catalysis depends on Y2701, which acts as the Acyl-ester intermediate; for beta-ketoacyl reductase 2 activity. One can recognise a Carrier 2 domain in the interval 2819–2894; it reads QELLEFTHSH…RLADHIGQQL (76 aa). S2854 carries the O-(pantetheine 4'-phosphoryl)serine modification. The segment at 2960 to 3166 is thioesterase; that stretch reads ICCAGTAAIS…DAIARHIDAW (207 aa). T2965 is a substrate binding site. S3031 serves as the catalytic Nucleophile; for thioesterase activity. Residues A3032 and D3058 each contribute to the substrate site. Residue H3148 is the Proton acceptor; for thioesterase activity of the active site.

Homodimer. Erythronolide synthase is composed of EryAI, EryAII and EryAIII multimodular (2 modules) polypeptides each coding for a functional synthase subunit which participates in 2 of the six FAS-like elongation steps required for formation of the polyketide. Module 1, 2, 3, 4, 5, and 6 participating in biosynthesis steps 1, 2, 3, 4, 5, and 6, respectively. The cofactor is pantetheine 4'-phosphate.

It catalyses the reaction 6 (S)-methylmalonyl-CoA + propanoyl-CoA + 6 NADPH + 12 H(+) = 6-deoxyerythronolide B + 6 CO2 + 6 NADP(+) + 7 CoA + H2O. The protein operates within antibiotic biosynthesis; erythromycin biosynthesis. With respect to regulation, inhibited by diphenyl phosphonates derivatives such as diphenyl allylphosphonate. In terms of biological role, involved in the biosynthesis of antibiotic erythromycin via the biosynthesis of its aglycone precursor, 6-deoxyerythronolide B (6-dEB). This chain is Erythronolide synthase EryA3, found in Saccharopolyspora erythraea (Streptomyces erythraeus).